We begin with the raw amino-acid sequence, 598 residues long: NADH-quinone oxidoreductase subunit C/D (598 aa).

Residues 1–189 (MTDLTTSDST…DPFVLTKQKE (189 aa)) form an NADH dehydrogenase I subunit C region. The NADH dehydrogenase I subunit D stretch occupies residues 213-598 (DFMFLNLGPN…IDFVMSDVDR (386 aa)).

This sequence in the N-terminal section; belongs to the complex I 30 kDa subunit family. The protein in the C-terminal section; belongs to the complex I 49 kDa subunit family. In terms of assembly, NDH-1 is composed of 13 different subunits. Subunits NuoB, CD, E, F, and G constitute the peripheral sector of the complex.

It is found in the cell inner membrane. The enzyme catalyses a quinone + NADH + 5 H(+)(in) = a quinol + NAD(+) + 4 H(+)(out). Functionally, NDH-1 shuttles electrons from NADH, via FMN and iron-sulfur (Fe-S) centers, to quinones in the respiratory chain. The immediate electron acceptor for the enzyme in this species is believed to be ubiquinone. Couples the redox reaction to proton translocation (for every two electrons transferred, four hydrogen ions are translocated across the cytoplasmic membrane), and thus conserves the redox energy in a proton gradient. This is NADH-quinone oxidoreductase subunit C/D from Yersinia enterocolitica serotype O:8 / biotype 1B (strain NCTC 13174 / 8081).